The primary structure comprises 275 residues: Replication protein A 32 kDa subunit (275 aa).

Residues 23-47 (MQSPGGFGSPAPTQGEKKSRSRSQQ) form a disordered region. Positions 76–150 (VTIVGIVRHA…KSVVAFKIAP (75 aa)) form a DNA-binding region, OB.

It belongs to the replication factor A protein 2 family. In terms of assembly, component of the replication protein A complex (RPA/RP-A), a heterotrimeric complex composed of RPA1, RPA2 and RPA3. Post-translationally, differentially phosphorylated throughout the cell cycle, becoming phosphorylated at the G1-S transition and dephosphorylated in late mitosis. Phosphorylation increases upon replication fork stalling.

It localises to the nucleus. Its subcellular location is the PML body. As part of the heterotrimeric replication protein A complex (RPA/RP-A), binds and stabilizes single-stranded DNA intermediates, that form during DNA replication or upon DNA stress. It prevents their reannealing and in parallel, recruits and activates different proteins and complexes involved in DNA metabolism. Thereby, it plays an essential role both in DNA replication and the cellular response to DNA damage. The sequence is that of Replication protein A 32 kDa subunit (rpa2) from Xenopus tropicalis (Western clawed frog).